The sequence spans 345 residues: S-adenosylmethionine:tRNA ribosyltransferase-isomerase (345 aa).

It belongs to the QueA family. Monomer.

The protein resides in the cytoplasm. It catalyses the reaction 7-aminomethyl-7-carbaguanosine(34) in tRNA + S-adenosyl-L-methionine = epoxyqueuosine(34) in tRNA + adenine + L-methionine + 2 H(+). The protein operates within tRNA modification; tRNA-queuosine biosynthesis. Functionally, transfers and isomerizes the ribose moiety from AdoMet to the 7-aminomethyl group of 7-deazaguanine (preQ1-tRNA) to give epoxyqueuosine (oQ-tRNA). The protein is S-adenosylmethionine:tRNA ribosyltransferase-isomerase of Shewanella woodyi (strain ATCC 51908 / MS32).